Reading from the N-terminus, the 510-residue chain is 2,3-bisphosphoglycerate-independent phosphoglycerate mutase (510 aa).

Mn(2+)-binding residues include aspartate 14 and serine 64. Serine 64 serves as the catalytic Phosphoserine intermediate. Substrate-binding positions include histidine 125, 155-156 (RD), arginine 187, arginine 193, 259-262 (RADR), and lysine 332. Mn(2+)-binding residues include aspartate 399, histidine 403, aspartate 440, histidine 441, and histidine 459.

The protein belongs to the BPG-independent phosphoglycerate mutase family. As to quaternary structure, monomer. Mn(2+) is required as a cofactor.

It carries out the reaction (2R)-2-phosphoglycerate = (2R)-3-phosphoglycerate. It functions in the pathway carbohydrate degradation; glycolysis; pyruvate from D-glyceraldehyde 3-phosphate: step 3/5. In terms of biological role, catalyzes the interconversion of 2-phosphoglycerate and 3-phosphoglycerate. The chain is 2,3-bisphosphoglycerate-independent phosphoglycerate mutase from Pseudomonas savastanoi pv. phaseolicola (strain 1448A / Race 6) (Pseudomonas syringae pv. phaseolicola (strain 1448A / Race 6)).